Here is a 661-residue protein sequence, read N- to C-terminus: Peroxisomal acyl-coenzyme A oxidase 1 (661 aa).

N6-succinyllysine is present on residues Lys-89 and Lys-90. Thr-139 is an FAD binding site. Lys-159 is modified (N6-succinyllysine). Gly-178 is an FAD binding site. N6-acetyllysine is present on Lys-216. At Lys-241 the chain carries N6-succinyllysine. Residues Lys-255, Lys-267, and Lys-272 each carry the N6-acetyllysine modification. Residue Lys-349 is modified to N6-succinyllysine. The Proton acceptor role is filled by Glu-421. N6-acetyllysine; alternate occurs at positions 437, 446, 512, and 637. Lys-437, Lys-446, Lys-512, and Lys-637 each carry N6-succinyllysine; alternate. At Lys-643 the chain carries N6-succinyllysine. A Phosphoserine modification is found at Ser-649. Lys-652 bears the N6-acetyllysine mark. The residue at position 655 (Lys-655) is an N6-succinyllysine. The Microbody targeting signal signature appears at 659–661; that stretch reads SKL.

It belongs to the acyl-CoA oxidase family. In terms of assembly, homodimer. Interacts with LONP2. It depends on FAD as a cofactor.

The protein localises to the peroxisome. It catalyses the reaction a 2,3-saturated acyl-CoA + O2 = a (2E)-enoyl-CoA + H2O2. The catalysed reaction is hexadecanoyl-CoA + O2 = (2E)-hexadecenoyl-CoA + H2O2. It carries out the reaction dodecanoyl-CoA + O2 = (2E)-dodecenoyl-CoA + H2O2. The enzyme catalyses octanoyl-CoA + O2 = (2E)-octenoyl-CoA + H2O2. It catalyses the reaction decanoyl-CoA + O2 = (2E)-decenoyl-CoA + H2O2. The catalysed reaction is tetradecanoyl-CoA + O2 = (2E)-tetradecenoyl-CoA + H2O2. It carries out the reaction hexadecanedioyl-CoA + O2 = (2E)-hexadecenedioyl-CoA + H2O2. The enzyme catalyses tetracosanoyl-CoA + O2 = (2E)-tetracosenoyl-CoA + H2O2. It catalyses the reaction glutaryl-CoA + O2 = (2E)-glutaconyl-CoA + H2O2. The catalysed reaction is hexanoyl-CoA + O2 = (2E)-hexenoyl-CoA + H2O2. It carries out the reaction octadecanoyl-CoA + O2 = (2E)-octadecenoyl-CoA + H2O2. The enzyme catalyses (5Z,8Z,11Z,14Z,17Z)-eicosapentaenoyl-CoA + O2 = (2E,5Z,8Z,11Z,14Z,17Z)-icosahexaenoyl-CoA + H2O2. It catalyses the reaction (6Z,9Z,12Z,15Z,18Z,21Z)-tetracosahexaenoyl-CoA + O2 = (2E,6Z,9Z,12Z,15Z,18Z,21Z)-tetracosaheptaenoyl-CoA + H2O2. It participates in lipid metabolism; peroxisomal fatty acid beta-oxidation. In terms of biological role, involved in the initial and rate-limiting step of peroxisomal beta-oxidation of straight-chain saturated and unsaturated very-long-chain fatty acids. Catalyzes the desaturation of fatty acyl-CoAs such as palmitoyl-CoA (hexadecanoyl-CoA) to 2-trans-enoyl-CoAs ((2E)-enoyl-CoAs) such as (2E)-hexadecenoyl-CoA, and donates electrons directly to molecular oxygen (O(2)), thereby producing hydrogen peroxide (H(2)O(2)). Isoform 2 shows higher activity with hexadecanoyl-CoA as substrate than isoform 1. The chain is Peroxisomal acyl-coenzyme A oxidase 1 (ACOX1) from Phascolarctos cinereus (Koala).